The chain runs to 305 residues: Aspartate carbamoyltransferase catalytic subunit (305 aa).

Positions 54 and 55 each coordinate carbamoyl phosphate. Lys83 contributes to the L-aspartate binding site. The carbamoyl phosphate site is built by Arg104, His132, and Gln135. Residues Arg165 and Arg226 each contribute to the L-aspartate site. The carbamoyl phosphate site is built by Leu265 and Pro266.

The protein belongs to the aspartate/ornithine carbamoyltransferase superfamily. ATCase family. Heterooligomer of catalytic and regulatory chains.

It catalyses the reaction carbamoyl phosphate + L-aspartate = N-carbamoyl-L-aspartate + phosphate + H(+). Its pathway is pyrimidine metabolism; UMP biosynthesis via de novo pathway; (S)-dihydroorotate from bicarbonate: step 2/3. Its function is as follows. Catalyzes the condensation of carbamoyl phosphate and aspartate to form carbamoyl aspartate and inorganic phosphate, the committed step in the de novo pyrimidine nucleotide biosynthesis pathway. The chain is Aspartate carbamoyltransferase catalytic subunit from Pyrobaculum arsenaticum (strain DSM 13514 / JCM 11321 / PZ6).